Consider the following 463-residue polypeptide: Endoglucanase (463 aa).

Residues 1 to 27 form the signal peptide; sequence MVEKRKIFTVLCACGIGFTSYTSCISA. A propeptide spanning residues 28–55 is cleaved from the precursor; the sequence is AAIDNDTLINNGHKINSSIITNSSQVSA. Residue glutamate 130 is the Proton donor of the active site. Catalysis depends on aspartate 191, which acts as the Nucleophile.

The protein belongs to the glycosyl hydrolase 8 (cellulase D) family. The N- and the C-terminus may be subjected to proteolysis.

It catalyses the reaction Endohydrolysis of (1-&gt;4)-beta-D-glucosidic linkages in cellulose, lichenin and cereal beta-D-glucans.. The chain is Endoglucanase from Bacillus sp. (strain KSM-330).